The primary structure comprises 279 residues: Undecaprenyl-diphosphatase (279 aa).

8 helical membrane-spanning segments follow: residues 2–22 (LFIE…TEWL), 44–64 (AFME…VIVI), 85–105 (WQLW…AVPL), 113–133 (FNHM…FLWI), 163–183 (VLSI…AIIL), 188–208 (TVAA…YSGL), 225–245 (LLVL…VIKL), and 255–275 (FTVF…YSVF).

The protein belongs to the UppP family.

It is found in the cell membrane. The catalysed reaction is di-trans,octa-cis-undecaprenyl diphosphate + H2O = di-trans,octa-cis-undecaprenyl phosphate + phosphate + H(+). Its function is as follows. Catalyzes the dephosphorylation of undecaprenyl diphosphate (UPP). Confers resistance to bacitracin. The polypeptide is Undecaprenyl-diphosphatase (Streptococcus equi subsp. zooepidemicus (strain H70)).